A 461-amino-acid chain; its full sequence is Bifunctional protein GlmU (461 aa).

The pyrophosphorylase stretch occupies residues M1–R229. UDP-N-acetyl-alpha-D-glucosamine contacts are provided by residues L8–G11, K22, Q72, and G77–T78. Residue D102 coordinates Mg(2+). UDP-N-acetyl-alpha-D-glucosamine-binding residues include G139, E154, N169, and N227. N227 is a binding site for Mg(2+). The tract at residues V230–D250 is linker. The interval G251 to E461 is N-acetyltransferase. Positions 332 and 350 each coordinate UDP-N-acetyl-alpha-D-glucosamine. The Proton acceptor role is filled by H362. Residues Y365 and N376 each contribute to the UDP-N-acetyl-alpha-D-glucosamine site. Acetyl-CoA contacts are provided by residues N385–Y386, A422, and R439.

It in the N-terminal section; belongs to the N-acetylglucosamine-1-phosphate uridyltransferase family. In the C-terminal section; belongs to the transferase hexapeptide repeat family. As to quaternary structure, homotrimer. It depends on Mg(2+) as a cofactor.

It localises to the cytoplasm. It carries out the reaction alpha-D-glucosamine 1-phosphate + acetyl-CoA = N-acetyl-alpha-D-glucosamine 1-phosphate + CoA + H(+). The catalysed reaction is N-acetyl-alpha-D-glucosamine 1-phosphate + UTP + H(+) = UDP-N-acetyl-alpha-D-glucosamine + diphosphate. It functions in the pathway nucleotide-sugar biosynthesis; UDP-N-acetyl-alpha-D-glucosamine biosynthesis; N-acetyl-alpha-D-glucosamine 1-phosphate from alpha-D-glucosamine 6-phosphate (route II): step 2/2. It participates in nucleotide-sugar biosynthesis; UDP-N-acetyl-alpha-D-glucosamine biosynthesis; UDP-N-acetyl-alpha-D-glucosamine from N-acetyl-alpha-D-glucosamine 1-phosphate: step 1/1. The protein operates within bacterial outer membrane biogenesis; LPS lipid A biosynthesis. Functionally, catalyzes the last two sequential reactions in the de novo biosynthetic pathway for UDP-N-acetylglucosamine (UDP-GlcNAc). The C-terminal domain catalyzes the transfer of acetyl group from acetyl coenzyme A to glucosamine-1-phosphate (GlcN-1-P) to produce N-acetylglucosamine-1-phosphate (GlcNAc-1-P), which is converted into UDP-GlcNAc by the transfer of uridine 5-monophosphate (from uridine 5-triphosphate), a reaction catalyzed by the N-terminal domain. The protein is Bifunctional protein GlmU of Lactobacillus helveticus (strain DPC 4571).